A 257-amino-acid polypeptide reads, in one-letter code: UPF0246 protein RHOS4_29700 (257 aa).

It belongs to the UPF0246 family.

This chain is UPF0246 protein RHOS4_29700, found in Cereibacter sphaeroides (strain ATCC 17023 / DSM 158 / JCM 6121 / CCUG 31486 / LMG 2827 / NBRC 12203 / NCIMB 8253 / ATH 2.4.1.) (Rhodobacter sphaeroides).